Consider the following 208-residue polypeptide: Interferon epsilon (208 aa).

A signal peptide spans 1–21 (MIIKHFFGTVLVLLASTTIFS). A disulfide bridge connects residues cysteine 53 and cysteine 163. N-linked (GlcNAc...) asparagine glycosylation is found at asparagine 95 and asparagine 104.

This sequence belongs to the alpha/beta interferon family. As to expression, endometrium-specific.

It localises to the secreted. Type I interferon required for maintaining basal levels of IFN-regulated genes, including 2'-5'-oligoadenylate synthetase, IRF7 and ISG15, in the female reproductive tract. Directly mediates protection against viral and bacterial genital infections. This Homo sapiens (Human) protein is Interferon epsilon (IFNE).